The following is a 94-amino-acid chain: Mitochondrial import receptor subunit TOM9-1 (94 aa).

The Cytoplasmic portion of the chain corresponds to 1–48; it reads MAPKKIGAGKGDSSILAKISNYDIVSQGRRAACDAVYVSKKLLKSTGK. Residues 49-66 traverse the membrane as a helical segment; sequence AAWIAGTTFLILAVPLIL. The Mitochondrial intermembrane segment spans residues 67-94; sequence ELEQDHRLGEIDFEQASLLGTPPVGAML.

The protein belongs to the Tom22 family. Forms part of the preprotein translocase complex of the outer mitochondrial membrane (TOM complex) which consists of at least 6 different proteins (TOM5, TOM6, TOM7, TOM20, TOM22/TOM9 and TOM40). As to expression, expressed in roots, flowers, young cotyledons and leaves.

It is found in the mitochondrion outer membrane. In terms of biological role, central component of the receptor complex responsible for the recognition and translocation of cytosolically synthesized mitochondrial preproteins. Together with TOM20 functions as the transit peptide receptor at the surface of the mitochondrion outer membrane and facilitates the movement of preproteins into the translocation pore. In Arabidopsis thaliana (Mouse-ear cress), this protein is Mitochondrial import receptor subunit TOM9-1 (TOM9-1).